Here is a 21-residue protein sequence, read N- to C-terminus: Protein IroK (21 aa).

In terms of biological role, possible increased expression of this protein (due to mutations upstream of the start codon) is proposed to be responsible for resistance to 3-hydroxypropionic acid (3-HP). This chain is Protein IroK (iroK), found in Escherichia coli (strain K12).